Reading from the N-terminus, the 494-residue chain is Subtilisin-like serine protease EN45_078720 (494 aa).

An N-terminal signal peptide occupies residues 1 to 16 (MKGFLSLTLLPLLVAA). Positions 17 to 136 (SPVAVNSIHN…IEKDSEVRTM (120 aa)) are cleaved as a propeptide — removed in mature form. One can recognise an Inhibitor I9 domain in the interval 43-136 (SYIVVFKKHV…IEKDSEVRTM (94 aa)). Residues 146–448 (PWGLARISHR…GGSANYTKIL (303 aa)) form the Peptidase S8 domain. IgE-binding regions lie at residues 180 to 198 (VIDT…RANW) and 209 to 231 (EDGN…GVAK). Catalysis depends on charge relay system residues Asp182 and His214. Residues Asn244 and Asn280 are each glycosylated (N-linked (GlcNAc...) asparagine). The Charge relay system role is filled by Ser376. Asn443 carries N-linked (GlcNAc...) asparagine glycosylation. Residues 454–494 (KAHNAETTVEDRIGGIIDSAEKAFHKELGAIYSEIKDAVSA) constitute a propeptide, removed in mature form.

Belongs to the peptidase S8 family.

In terms of biological role, serine protease. This Penicillium chrysogenum (Penicillium notatum) protein is Subtilisin-like serine protease EN45_078720.